A 336-amino-acid chain; its full sequence is CASP-like protein UU1 (336 aa).

Residues 1 to 170 lie on the Cytoplasmic side of the membrane; it reads MGKGPGLDPS…PAMESNKDDN (170 aa). Residues 171–191 traverse the membrane as a helical segment; it reads FFGAIVLSLRAAQIVFTVVGL. The Extracellular portion of the chain corresponds to 192-222; sequence GVMGSLKHTSHGDYYYYYYDFSFTQVDSYIG. A helical membrane pass occupies residues 223 to 243; that stretch reads VLSLDVIVCLYAIVQLVLCFI. The Cytoplasmic segment spans residues 244-261; it reads QRSNQGKYLSSPTTVAAK. The chain crosses the membrane as a helical span at residues 262–282; the sequence is LTFVFDQVLAYALVATAGAAA. Topologically, residues 283–307 are extracellular; that stretch reads GSALEIRKGTSCSGTWTVICSKGEA. Residues 308–328 form a helical membrane-spanning segment; the sequence is SVAMSFFAFAFLAATAAVYSV. Over 329–336 the chain is Cytoplasmic; the sequence is RLLRITGR.

This sequence belongs to the Casparian strip membrane proteins (CASP) family. As to quaternary structure, homodimer and heterodimers.

The protein localises to the cell membrane. The sequence is that of CASP-like protein UU1 from Physcomitrium patens (Spreading-leaved earth moss).